Consider the following 416-residue polypeptide: MTDRLTPRRAAPRQPALLPLADRCTALLSRLSHADAAGGIVLLIAAAAALAWANSPWAASYHALWHVPLSVAVGGWQLTQSLHFWVNDALMTVFFLVVGLEIRRELHDGVLAQPRDALLPVLAALGGVAVPALLYLALVPPALRSGWAVPTATDIAFAVGVLALLGRGLPPVLRVFLLTLAIIDDLVAVLIIALFYSGGLQWPMFGIAALGLAGVLLLQQLGVRRAWAYVPAGAVLWWGIWQTGAHPTLAGVVLGLVTPVHALAGREPAPPVQRVQASLHPWVTFGVMPLFALANAGVALGSAGGAQPAAPGTGLLMAAVAVALVAGKPLGVLLACWLAVRLRLCALPAGMGWGGLLLTGLLAGIGFTMAIFIATLAFDSAALLDAAKRGVLLASGLAALLGLAWGWWLQRRATTA.

11 helical membrane passes run G39–A59, L82–I102, L119–V139, G146–G166, V175–F195, G198–L218, A234–L254, P281–G301, L315–A335, W353–I373, and G390–Q410.

Belongs to the NhaA Na(+)/H(+) (TC 2.A.33) antiporter family.

The protein localises to the cell inner membrane. It catalyses the reaction Na(+)(in) + 2 H(+)(out) = Na(+)(out) + 2 H(+)(in). In terms of biological role, na(+)/H(+) antiporter that extrudes sodium in exchange for external protons. The protein is Na(+)/H(+) antiporter NhaA of Acidovorax sp. (strain JS42).